A 313-amino-acid chain; its full sequence is Beta-lactamase BRO-1 (313 aa).

The first 25 residues, 1–25 (MQRRHFLQKTLLALPIIFSGNLLTG), serve as a signal peptide directing secretion. The N-palmitoyl cysteine moiety is linked to residue Cys-26. Cys-26 carries S-diacylglycerol cysteine lipidation. Ser-90 acts as the Acyl-ester intermediate in catalysis. Substrate is bound at residue 255 to 257 (KTG).

Belongs to the class-A beta-lactamase family.

The protein resides in the cell membrane. The catalysed reaction is a beta-lactam + H2O = a substituted beta-amino acid. This is Beta-lactamase BRO-1 (bla) from Moraxella catarrhalis (Branhamella catarrhalis).